The following is a 105-amino-acid chain: DNA-directed RNA polymerase RPB9 homolog (105 aa).

Positions 4, 7, 24, 26, 73, 76, and 96 each coordinate Zn(2+). Residues 4-26 form a C4-type; atypical zinc finger; that stretch reads CKACSSCMVRTYVDGNIIFRCSC.

This sequence belongs to the Asfivirus DNA-directed RNA polymerase RPB9 homolog family. Part of the viral DNA-directed RNA polymerase that consists of 8 polII-like subunits (RPB1, RPB2, RPB3, RPB5, RPB6, RPB7, RPB9, RPB10), a capping enzyme and a termination factor.

It localises to the host cytoplasm. In terms of biological role, component of the DNA-directed RNA polymerase (RNAP) that catalyzes the transcription in the cytoplasm of viral DNA into RNA using the four ribonucleoside triphosphates as substrates. This is DNA-directed RNA polymerase RPB9 homolog from African swine fever virus (isolate Pig/Kenya/KEN-50/1950) (ASFV).